The following is a 216-amino-acid chain: MTLYVLSKPILLHFLTQLRSKNIDQISFRKNLVKLGRIIGYEIVNTLDYESIDVETPLGTKAKGIYIYDLENILIISILRAATPFVEGLLKALPTARLGVIAASRKEKEVQVGYPEDIPVDVYYMKIPQVSHKDTVIIADPMIATGSTMRKAIKSIVNSQPKRIYIASVIISEYGLKRLMEEFPFVDIFTISVDPEIDNRGFILPGLGDAGDRAFG.

30 to 34 (KNLVK) contributes to the GTP binding site. Residues Arg80, Arg105, and 140-148 (DPMIATGST) contribute to the 5-phospho-alpha-D-ribose 1-diphosphate site. Uracil-binding positions include Ile203 and 208-210 (GDA). Residue Asp209 coordinates 5-phospho-alpha-D-ribose 1-diphosphate.

It belongs to the UPRTase family. Mg(2+) is required as a cofactor.

It carries out the reaction UMP + diphosphate = 5-phospho-alpha-D-ribose 1-diphosphate + uracil. The protein operates within pyrimidine metabolism; UMP biosynthesis via salvage pathway; UMP from uracil: step 1/1. With respect to regulation, allosterically activated by GTP. In terms of biological role, catalyzes the conversion of uracil and 5-phospho-alpha-D-ribose 1-diphosphate (PRPP) to UMP and diphosphate. In Sulfolobus acidocaldarius (strain ATCC 33909 / DSM 639 / JCM 8929 / NBRC 15157 / NCIMB 11770), this protein is Uracil phosphoribosyltransferase.